Reading from the N-terminus, the 530-residue chain is N-acetylmuramoyl-L-alanine amidase (530 aa).

The N-terminal stretch at 1 to 22 (MKAWGALWIVLGLLLWPEPGAA) is a signal peptide. N-linked (GlcNAc...) asparagine glycans are attached at residues N61, N80, and N174. S219 carries the phosphoserine modification. N-linked (GlcNAc...) asparagine glycosylation occurs at N335. The N-acetylmuramoyl-L-alanine amidase domain maps to 386–512 (FLYVHHTYVP…RQLVLTHCPG (127 aa)). H390 is a Zn(2+) binding site. A disulfide bridge links C399 with C405. A glycan (N-linked (GlcNAc...) asparagine) is linked at N465. Zn(2+)-binding residues include H502 and C510.

It belongs to the N-acetylmuramoyl-L-alanine amidase 2 family. Requires Zn(2+) as cofactor. Strongly expressed in liver and fetal liver.

The protein localises to the secreted. The protein resides in the membrane. The catalysed reaction is Hydrolyzes the link between N-acetylmuramoyl residues and L-amino acid residues in certain cell-wall glycopeptides.. May play a scavenger role by digesting biologically active peptidoglycan (PGN) into biologically inactive fragments. Has no direct bacteriolytic activity. The chain is N-acetylmuramoyl-L-alanine amidase (Pglyrp2) from Mus musculus (Mouse).